Reading from the N-terminus, the 477-residue chain is Trigger factor (477 aa).

A PPIase FKBP-type domain is found at 169–254 (EDRVTIDYLG…VKEVAKPNEL (86 aa)). The segment at 435 to 477 (VSKEELTAEDEDAASEAKPAKKAAAKKKAAPKKKAEEGKSEEA) is disordered. Over residues 454 to 466 (AKKAAAKKKAAPK) the composition is skewed to basic residues. The span at 467 to 477 (KKAEEGKSEEA) shows a compositional bias: basic and acidic residues.

The protein belongs to the FKBP-type PPIase family. Tig subfamily.

The protein resides in the cytoplasm. It catalyses the reaction [protein]-peptidylproline (omega=180) = [protein]-peptidylproline (omega=0). In terms of biological role, involved in protein export. Acts as a chaperone by maintaining the newly synthesized protein in an open conformation. Functions as a peptidyl-prolyl cis-trans isomerase. In Brucella melitensis biotype 1 (strain ATCC 23456 / CCUG 17765 / NCTC 10094 / 16M), this protein is Trigger factor (tig).